Consider the following 94-residue polypeptide: Long neurotoxin LNTX1 (94 aa).

Positions 1 to 21 (MKILLLTLVVVTIMCLDLGYT) are cleaved as a signal peptide. Intrachain disulfides connect Cys-24/Cys-43, Cys-36/Cys-64, Cys-49/Cys-53, Cys-68/Cys-79, and Cys-80/Cys-85.

The protein belongs to the three-finger toxin family. Long-chain subfamily. Type II alpha-neurotoxin sub-subfamily. As to quaternary structure, monomer. In terms of tissue distribution, expressed by the venom gland.

It localises to the secreted. Binds with high affinity to muscular (alpha-1/CHRNA1) and neuronal (alpha-7/CHRNA7) nicotinic acetylcholine receptor (nAChR) and inhibits acetylcholine from binding to the receptor, thereby impairing neuromuscular and neuronal transmission. Recombinant LNTX1 leads to a functional block of the muscle-type acetylcholine receptors. Has a cytotoxic activity. The protein is Long neurotoxin LNTX1 of Ophiophagus hannah (King cobra).